Reading from the N-terminus, the 559-residue chain is NAD-dependent histone deacetylase SIR2 (559 aa).

Residues 1-73 are disordered; that stretch reads MSESASMLQG…NDHSAQEVAG (73 aa). Basic and acidic residues predominate over residues 39–51; it reads NDEKELLEATKAD. Acidic residues predominate over residues 52–62; sequence ELDEVVDDYAE. A Deacetylase sirtuin-type domain is found at 223–514; sequence RLANFFTLDH…AFIAQKCGWD (292 aa). NAD(+) is bound by residues 248-267 and 330-333; these read GAGI…KGFY and QNID. The Proton acceptor role is filled by H350. Zn(2+)-binding residues include C358, C361, C382, and C385. NAD(+) is bound by residues 458–460, 483–485, and C500; these read GTS and NRD.

Belongs to the sirtuin family. Class I subfamily. Zn(2+) is required as a cofactor.

It is found in the nucleus. It catalyses the reaction N(6)-acetyl-L-lysyl-[protein] + NAD(+) + H2O = 2''-O-acetyl-ADP-D-ribose + nicotinamide + L-lysyl-[protein]. Functionally, NAD-dependent deacetylase. Heterochromatin component that silences transcription at silent mating loci, telomeres and the ribosomal DNA, and that also suppresses recombination in the rDNA and extends replicative life span. It acts as a NAD-dependent histone deacetylase, which deacetylates 'Lys-9' and 'Lys-14' of Histone H3 and 'Lys-16' of Histone H4. The protein is NAD-dependent histone deacetylase SIR2 (SIR2) of Eremothecium gossypii (strain ATCC 10895 / CBS 109.51 / FGSC 9923 / NRRL Y-1056) (Yeast).